We begin with the raw amino-acid sequence, 262 residues long: Phenylalanine-4-hydroxylase (262 aa).

His121, His126, and Glu166 together coordinate Fe cation.

The protein belongs to the biopterin-dependent aromatic amino acid hydroxylase family. In terms of assembly, monomer. Fe(2+) serves as cofactor.

It catalyses the reaction (6R)-L-erythro-5,6,7,8-tetrahydrobiopterin + L-phenylalanine + O2 = (4aS,6R)-4a-hydroxy-L-erythro-5,6,7,8-tetrahydrobiopterin + L-tyrosine. Its pathway is amino-acid degradation; L-phenylalanine degradation; acetoacetate and fumarate from L-phenylalanine: step 1/6. The protein is Phenylalanine-4-hydroxylase (phhA) of Pseudomonas aeruginosa (strain ATCC 15692 / DSM 22644 / CIP 104116 / JCM 14847 / LMG 12228 / 1C / PRS 101 / PAO1).